Here is a 369-residue protein sequence, read N- to C-terminus: MAESQEFAELWERNLISTQEAGTCWELINDEYLPSSFDPNIFDNVLTEQPQPSTSPPTASVPVATDYPGEHGFKLGFPQSGTAKSVTCTYSSDLNKLFCQLAKTCPVQMVVNVAPPQGSVIRATAIYKKSEHVAEVVRRCPHHERTPDGDGLAPAAHLIRVEGNSRALYREDDVNSRHSVVVPYEVPQLGSEFTTVLYNFMCNSSCMGGMNRRPILTIISLETHDGQLLGRRSFEVRVCACPGRDRKTEESNFRKDQETKTLDKIPSANKRSLTKDSTSSVPRPEGSKKAKLSGSSDEEIYTLQVRGKERYEMLKKINDSLELSDVVPPSEMDRYRQKLLTKGKKKDGQTPEPKRGKKLMVKDEKSDSD.

The tract at residues 1-28 (MAESQEFAELWERNLISTQEAGTCWELI) is transcription activation (acidic). The DNA-binding element occupies 66–256 (DYPGEHGFKL…KTEESNFRKD (191 aa)). 4 residues coordinate Zn(2+): Cys140, His143, Cys202, and Cys206. The interaction with DNA stretch occupies residues 237–244 (RVCACPGR). Basic and acidic residues predominate over residues 246–263 (RKTEESNFRKDQETKTLD). 2 disordered regions span residues 246–296 (RKTE…SGSS) and 318–369 (NDSL…SDSD). The segment covering 269–281 (NKRSLTKDSTSSV) has biased composition (polar residues). Positions 270–289 (KRSLTKDSTSSVPRPEGSKK) match the Bipartite nuclear localization signal motif. The oligomerization stretch occupies residues 298–329 (EEIYTLQVRGKERYEMLKKINDSLELSDVVPP). Positions 312 to 323 (EMLKKINDSLEL) match the Nuclear export signal motif. Residues 342–365 (KGKKKDGQTPEPKRGKKLMVKDEK) are basic (repression of DNA-binding). The span at 346–369 (KDGQTPEPKRGKKLMVKDEKSDSD) shows a compositional bias: basic and acidic residues.

Belongs to the p53 family. In terms of assembly, binds DNA as a homotetramer. Zn(2+) is required as a cofactor.

Its subcellular location is the cytoplasm. The protein localises to the nucleus. In terms of biological role, multifunctional transcription factor that induces cell cycle arrest, DNA repair or apoptosis upon binding to its target DNA sequence. Acts as a tumor suppressor in many tumor types; induces growth arrest or apoptosis depending on the physiological circumstances and cell type. Negatively regulates cell division by controlling expression of a set of genes required for this process. One of the activated genes is an inhibitor of cyclin-dependent kinases. Apoptosis induction seems to be mediated either by stimulation of BAX and FAS antigen expression, or by repression of Bcl-2 expression. The protein is Cellular tumor antigen p53 (tp53) of Barbus barbus (Barbel).